We begin with the raw amino-acid sequence, 125 residues long: uncharacterized protein (125 aa).

This sequence belongs to the asfivirus B125R family.

This is an uncharacterized protein from African swine fever virus (isolate Pig/Kenya/KEN-50/1950) (ASFV).